The chain runs to 96 residues: ATP synthase subunit f, mitochondrial (96 aa).

The protein belongs to the ATPase F chain family.

The protein resides in the mitochondrion. It localises to the mitochondrion inner membrane. In terms of biological role, mitochondrial membrane ATP synthase (F(1)F(0) ATP synthase or Complex V) produces ATP from ADP in the presence of a proton gradient across the membrane which is generated by electron transport complexes of the respiratory chain. F-type ATPases consist of two structural domains, F(1) - containing the extramembraneous catalytic core and F(0) - containing the membrane proton channel, linked together by a central stalk and a peripheral stalk. During catalysis, ATP synthesis in the catalytic domain of F(1) is coupled via a rotary mechanism of the central stalk subunits to proton translocation. This chain is ATP synthase subunit f, mitochondrial (atp17), found in Schizosaccharomyces pombe (strain 972 / ATCC 24843) (Fission yeast).